The sequence spans 599 residues: Elongation factor 4 (599 aa).

Residues 2–184 (KNIRNFSIIA…RLVRDIPPPE (183 aa)) enclose the tr-type G domain. GTP is bound by residues 14-19 (DHGKST) and 131-134 (NKID).

The protein belongs to the TRAFAC class translation factor GTPase superfamily. Classic translation factor GTPase family. LepA subfamily.

The protein resides in the cell inner membrane. The enzyme catalyses GTP + H2O = GDP + phosphate + H(+). Required for accurate and efficient protein synthesis under certain stress conditions. May act as a fidelity factor of the translation reaction, by catalyzing a one-codon backward translocation of tRNAs on improperly translocated ribosomes. Back-translocation proceeds from a post-translocation (POST) complex to a pre-translocation (PRE) complex, thus giving elongation factor G a second chance to translocate the tRNAs correctly. Binds to ribosomes in a GTP-dependent manner. This is Elongation factor 4 from Escherichia coli (strain UTI89 / UPEC).